The sequence spans 413 residues: MSPPAVDIKVSTDAPPKIVKALNLLGSTGSIGTQTLDIVAQYPDRFRVVGLAAGRNLERLIPQIRQFQPEIVSIADPEQLPELEAALADLPQKPQLVAGEAGIAAVAAYGDAEVVVTGIVGCAGLVPTIAAIKAGKDIALANKETLIAGGPVVLPLLQEYGVKLLPADSEHSAIFQCLQGVPEGGLRKIILTASGGAFRDWPVEKLAQVTVADALKHPNWSMGPKITVDSATLMNKGLEVIEAHYLFGMDYDNIEIVIHPQSIIHSLIELQDTSVLAQLGWPDMRLPLLYALSWPERIPTNWSPLDLVKAGDLTFRSPDHQKYPCMGLAYAAGRAGGAMPAVLNAANEQAVALFIAEAIAFLEIPRLIEMVCDRYSAQNIPNPTLEDILAADRWARATVQELAQRGVSPMVAL.

Thr28, Gly29, Ser30, Ile31, Gly54, Arg55, Asn56, and Asn142 together coordinate NADPH. Lys143 contributes to the 1-deoxy-D-xylulose 5-phosphate binding site. Glu144 serves as a coordination point for NADPH. Asp168 is a binding site for Mn(2+). 1-deoxy-D-xylulose 5-phosphate-binding residues include Ser169, Glu170, Ser194, and His217. Glu170 is a Mn(2+) binding site. Gly223 lines the NADPH pocket. Ser230, Asn235, Lys236, and Glu239 together coordinate 1-deoxy-D-xylulose 5-phosphate. Glu239 is a Mn(2+) binding site.

Belongs to the DXR family. Mg(2+) serves as cofactor. Mn(2+) is required as a cofactor.

It carries out the reaction 2-C-methyl-D-erythritol 4-phosphate + NADP(+) = 1-deoxy-D-xylulose 5-phosphate + NADPH + H(+). Its pathway is isoprenoid biosynthesis; isopentenyl diphosphate biosynthesis via DXP pathway; isopentenyl diphosphate from 1-deoxy-D-xylulose 5-phosphate: step 1/6. Functionally, catalyzes the NADPH-dependent rearrangement and reduction of 1-deoxy-D-xylulose-5-phosphate (DXP) to 2-C-methyl-D-erythritol 4-phosphate (MEP). This is 1-deoxy-D-xylulose 5-phosphate reductoisomerase from Thermosynechococcus vestitus (strain NIES-2133 / IAM M-273 / BP-1).